The sequence spans 245 residues: tRNA pseudouridine synthase A (245 aa).

Catalysis depends on aspartate 52, which acts as the Nucleophile. Tyrosine 111 lines the substrate pocket.

Belongs to the tRNA pseudouridine synthase TruA family. As to quaternary structure, homodimer.

The catalysed reaction is uridine(38/39/40) in tRNA = pseudouridine(38/39/40) in tRNA. Its function is as follows. Formation of pseudouridine at positions 38, 39 and 40 in the anticodon stem and loop of transfer RNAs. The protein is tRNA pseudouridine synthase A of Thermotoga maritima (strain ATCC 43589 / DSM 3109 / JCM 10099 / NBRC 100826 / MSB8).